Reading from the N-terminus, the 284-residue chain is Probable plastid-lipid-associated protein 10, chloroplastic (284 aa).

A chloroplast-targeting transit peptide spans 1–40 (MDRIASATFSCPAISLSRVCRISPFGLNIKTNHRKRFSCR).

This sequence belongs to the PAP/fibrillin family.

The protein resides in the plastid. The protein localises to the chloroplast. Its subcellular location is the plastoglobule. This Arabidopsis thaliana (Mouse-ear cress) protein is Probable plastid-lipid-associated protein 10, chloroplastic (PAP10).